Here is a 514-residue protein sequence, read N- to C-terminus: Serine/threonine protein phosphatase PstP (514 aa).

Residues methionine 1–alanine 302 lie on the Cytoplasmic side of the membrane. In terms of domain architecture, PPM-type phosphatase spans arginine 9–valine 238. Residues aspartate 38, glycine 39, aspartate 118, serine 160, aspartate 191, and aspartate 229 each contribute to the Mn(2+) site. A helical membrane pass occupies residues phenylalanine 303 to isoleucine 323. Topologically, residues arginine 324 to alanine 514 are extracellular. Residues leucine 420–alanine 514 form a disordered region. Low complexity predominate over residues threonine 440–alanine 480.

Mn(2+) is required as a cofactor.

It is found in the cell membrane. It carries out the reaction O-phospho-L-seryl-[protein] + H2O = L-seryl-[protein] + phosphate. It catalyses the reaction O-phospho-L-threonyl-[protein] + H2O = L-threonyl-[protein] + phosphate. Its function is as follows. Plays an important role in regulating cell division and growth by reversible phosphorylation signaling. May play important roles in regulating cellular metabolism and signaling pathways, which could mediate the growth and development of the cell. Plays a role in establishing and maintaining infection. This is Serine/threonine protein phosphatase PstP (pstP) from Mycobacterium tuberculosis (strain CDC 1551 / Oshkosh).